Consider the following 953-residue polypeptide: Isoleucine--tRNA ligase (953 aa).

Positions 57-67 (PYANGDIHIGH) match the 'HIGH' region motif. Glu582 is a binding site for L-isoleucyl-5'-AMP. Positions 623 to 627 (KMSKS) match the 'KMSKS' region motif. Residue Lys626 participates in ATP binding. 4 residues coordinate Zn(2+): Cys916, Cys919, Cys936, and Cys939.

It belongs to the class-I aminoacyl-tRNA synthetase family. IleS type 1 subfamily. Monomer. Requires Zn(2+) as cofactor.

It localises to the cytoplasm. It carries out the reaction tRNA(Ile) + L-isoleucine + ATP = L-isoleucyl-tRNA(Ile) + AMP + diphosphate. Functionally, catalyzes the attachment of isoleucine to tRNA(Ile). As IleRS can inadvertently accommodate and process structurally similar amino acids such as valine, to avoid such errors it has two additional distinct tRNA(Ile)-dependent editing activities. One activity is designated as 'pretransfer' editing and involves the hydrolysis of activated Val-AMP. The other activity is designated 'posttransfer' editing and involves deacylation of mischarged Val-tRNA(Ile). The protein is Isoleucine--tRNA ligase of Bordetella petrii (strain ATCC BAA-461 / DSM 12804 / CCUG 43448).